We begin with the raw amino-acid sequence, 260 residues long: Adenosylcobinamide-GDP ribazoletransferase (260 aa).

7 consecutive transmembrane segments (helical) span residues T42–I62, L68–L88, I118–L137, W144–S166, A180–T200, L201–I221, and I237–Q257.

It belongs to the CobS family. Requires Mg(2+) as cofactor.

The protein localises to the cell inner membrane. The catalysed reaction is alpha-ribazole + adenosylcob(III)inamide-GDP = adenosylcob(III)alamin + GMP + H(+). It catalyses the reaction alpha-ribazole 5'-phosphate + adenosylcob(III)inamide-GDP = adenosylcob(III)alamin 5'-phosphate + GMP + H(+). It participates in cofactor biosynthesis; adenosylcobalamin biosynthesis; adenosylcobalamin from cob(II)yrinate a,c-diamide: step 7/7. Its function is as follows. Joins adenosylcobinamide-GDP and alpha-ribazole to generate adenosylcobalamin (Ado-cobalamin). Also synthesizes adenosylcobalamin 5'-phosphate from adenosylcobinamide-GDP and alpha-ribazole 5'-phosphate. The chain is Adenosylcobinamide-GDP ribazoletransferase from Bradyrhizobium diazoefficiens (strain JCM 10833 / BCRC 13528 / IAM 13628 / NBRC 14792 / USDA 110).